The sequence spans 1275 residues: Histone-lysine N-methyltransferase PRDM16 (1275 aa).

Basic residues predominate over residues 1 to 10 (MRSKARARKL). The disordered stretch occupies residues 1–66 (MRSKARARKL…SEDFTPKEGS (66 aa)). Residues 82 to 211 (PDFELRESSI…PGEELLVHVK (130 aa)) enclose the SET domain. A C2H2-type 1; degenerate zinc finger spans residues 230 to 255 (FRCDECDELFQCRLDLRRHKKYACSS). 5 C2H2-type zinc fingers span residues 282 to 304 (HECK…MIVH), 310 to 332 (YKCD…QMSH), 338 to 361 (FECE…RSQH), 367 to 389 (HACP…KHIH), and 395 to 417 (FICE…KRMH). A C2H2-type 7; atypical zinc finger spans residues 424-446 (IKCKDCGQMFSTTSSLNKHRRFC). Disordered stretches follow at residues 592 to 658 (VKNR…VPPG) and 789 to 838 (APKV…GVSE). Positions 610–625 (TTTGTDLDTTTGTGSD) are enriched in low complexity. 2 stretches are compositionally biased toward basic and acidic residues: residues 631–648 (DSDR…ESKP) and 821–835 (REPR…RKPG). Residues 680-1038 (EEQLLTASGA…KHEHEGAPVS (359 aa)) are interaction with CTBP1, CTBP2 and ZNF516. The interval 740-1275 (PFTDRALAHN…SGAFNPINHL (536 aa)) is mediates interaction with SKI and regulation of TGF-beta signaling. C2H2-type zinc fingers lie at residues 951-973 (YTCR…LRTH), 979-1002 (YRCK…RNIH), and 1008-1030 (FKCH…LKKH). Disordered stretches follow at residues 1027 to 1065 (LKKH…HALL) and 1084 to 1169 (EMNQ…MGFD). Over residues 1038–1058 (SQHSGVLTNHLGTSASSPTSE) the composition is skewed to polar residues. The span at 1117-1133 (DVEEEEEEELEEEDDDS) shows a compositional bias: acidic residues.

Belongs to the PRDM16 family. As to quaternary structure, interacts with CEBPA, CEBPB and CEBPD; the interaction is direct. Interacts with PPARG and PPARA; controls brown adipocytes. Interacts with CTBP1 and CTBP2; represses the expression of WAT-specific genes. Interacts with PPARGC1A and PPARGC1B; interaction with PPARGC1A or PPARGC1B activates the transcription of BAT-specific gene. Interacts with HDAC1, SKI and SMAD2; the interaction with SKI promotes the recruitment of SMAD3-HDAC1 complex on the promoter of TGF-beta target genes. Interacts with ZNF516; the interaction is direct and may play a role in the transcription of brown adipose tissue-specific gene. As to expression, enriched in BAT compared to WAT. Detected in heart, lung, kidney and brain. Expressed in nuclei of cardiomyocytes.

Its subcellular location is the nucleus. The protein resides in the cytoplasm. It carries out the reaction L-lysyl(9)-[histone H3] + S-adenosyl-L-methionine = N(6)-methyl-L-lysyl(9)-[histone H3] + S-adenosyl-L-homocysteine + H(+). Its function is as follows. Binds DNA and functions as a transcriptional regulator. Displays histone methyltransferase activity and monomethylates 'Lys-9' of histone H3 (H3K9me1) in vitro. Probably catalyzes the monomethylation of free histone H3 in the cytoplasm which is then transported to the nucleus and incorporated into nucleosomes where SUV39H methyltransferases use it as a substrate to catalyze histone H3 'Lys-9' trimethylation. Likely to be one of the primary histone methyltransferases along with MECOM/PRDM3 that direct cytoplasmic H3K9me1 methylation. Functions in the differentiation of brown adipose tissue (BAT) which is specialized in dissipating chemical energy in the form of heat in response to cold or excess feeding while white adipose tissue (WAT) is specialized in the storage of excess energy and the control of systemic metabolism. Together with CEBPB, regulates the differentiation of myoblastic precursors into brown adipose cells. Functions as a repressor of TGF-beta signaling. The chain is Histone-lysine N-methyltransferase PRDM16 from Mus musculus (Mouse).